The primary structure comprises 549 residues: Cation/acetate symporter ActP (549 aa).

A run of 13 helical transmembrane segments spans residues 33–53 (WQAI…TYWA), 77–97 (LAIA…ALVF), 103–123 (GLIY…LIAE), 148–168 (ILSA…QMVG), 183–203 (IAVV…GMLA), 206–226 (WVQI…AFMV), 262–282 (ISAL…PHIL), 303–323 (GFMG…IMLV), 355–375 (LFLG…VAGL), 404–424 (VSKI…VLFE), 428–448 (IAFM…PIIL), 464–484 (GGWL…TIWV), and 493–513 (IFPY…GIWF).

This sequence belongs to the sodium:solute symporter (SSF) (TC 2.A.21) family.

The protein resides in the cell inner membrane. Functionally, transports acetate. The chain is Cation/acetate symporter ActP from Escherichia coli O17:K52:H18 (strain UMN026 / ExPEC).